Here is a 1203-residue protein sequence, read N- to C-terminus: DNA-directed RNA polymerase subunit beta' (1203 aa).

Zn(2+) contacts are provided by Cys60, Cys62, Cys75, and Cys78. Asp449, Asp451, and Asp453 together coordinate Mg(2+). Zn(2+) contacts are provided by Cys818, Cys892, Cys899, and Cys902.

The protein belongs to the RNA polymerase beta' chain family. The RNAP catalytic core consists of 2 alpha, 1 beta, 1 beta' and 1 omega subunit. When a sigma factor is associated with the core the holoenzyme is formed, which can initiate transcription. The cofactor is Mg(2+). Zn(2+) is required as a cofactor.

It catalyses the reaction RNA(n) + a ribonucleoside 5'-triphosphate = RNA(n+1) + diphosphate. DNA-dependent RNA polymerase catalyzes the transcription of DNA into RNA using the four ribonucleoside triphosphates as substrates. The protein is DNA-directed RNA polymerase subunit beta' of Bacillus cereus (strain ATCC 10987 / NRS 248).